The following is an 829-amino-acid chain: Periplasmic nitrate reductase (829 aa).

The tat-type signal signal peptide spans 1 to 29 (MKMTRRAFVKANAAASAAAVAGVTLPASA). The 4Fe-4S Mo/W bis-MGD-type domain occupies 41-97 (IKWDKAPCRFCGTGCSVLVGTQNGRVVATQGDPEAPVNKGLNCIKGYFLSKIMYGKD). C48, C51, C55, and C83 together coordinate [4Fe-4S] cluster. Residues K85, Q152, N177, C181, 214–221 (WGSNMAEM), 245–249 (STYYH), 264–266 (QSD), M374, Q378, N484, 510–511 (SD), K533, D560, and 718–727 (TGRVLEHWHT) each bind Mo-bis(molybdopterin guanine dinucleotide). A substrate-binding site is contributed by F794. Mo-bis(molybdopterin guanine dinucleotide) contacts are provided by N802 and K819.

The protein belongs to the prokaryotic molybdopterin-containing oxidoreductase family. NasA/NapA/NarB subfamily. In terms of assembly, component of the periplasmic nitrate reductase NapAB complex composed of NapA and NapB. It depends on [4Fe-4S] cluster as a cofactor. The cofactor is Mo-bis(molybdopterin guanine dinucleotide). Predicted to be exported by the Tat system. The position of the signal peptide cleavage has not been experimentally proven.

The protein resides in the periplasm. The catalysed reaction is 2 Fe(II)-[cytochrome] + nitrate + 2 H(+) = 2 Fe(III)-[cytochrome] + nitrite + H2O. Catalytic subunit of the periplasmic nitrate reductase complex NapAB. Receives electrons from NapB and catalyzes the reduction of nitrate to nitrite. The protein is Periplasmic nitrate reductase of Aliivibrio fischeri (strain ATCC 700601 / ES114) (Vibrio fischeri).